A 209-amino-acid chain; its full sequence is Uracil phosphoribosyltransferase (209 aa).

Residues R79, R104, and 131-139 (DPMLATGGS) contribute to the 5-phospho-alpha-D-ribose 1-diphosphate site. Residues I194 and 199–201 (GDA) contribute to the uracil site. D200 lines the 5-phospho-alpha-D-ribose 1-diphosphate pocket.

The protein belongs to the UPRTase family. Mg(2+) is required as a cofactor.

It catalyses the reaction UMP + diphosphate = 5-phospho-alpha-D-ribose 1-diphosphate + uracil. The protein operates within pyrimidine metabolism; UMP biosynthesis via salvage pathway; UMP from uracil: step 1/1. With respect to regulation, allosterically activated by GTP. In terms of biological role, catalyzes the conversion of uracil and 5-phospho-alpha-D-ribose 1-diphosphate (PRPP) to UMP and diphosphate. This Brevibacillus brevis (strain 47 / JCM 6285 / NBRC 100599) protein is Uracil phosphoribosyltransferase.